A 106-amino-acid chain; its full sequence is Toxin-like structure LSTX-D9 (106 aa).

Positions 1–20 (MMKVLVVVALLLTLIIYSSS) are cleaved as a signal peptide. The propeptide occupies 21–41 (DGIDDLEADELVSLMAHEQTR). Cystine bridges form between Cys45–Cys60, Cys52–Cys69, Cys59–Cys85, and Cys71–Cys83.

It belongs to the neurotoxin 19 (CSTX) family. 02 (D7) subfamily. In terms of tissue distribution, expressed by the venom gland.

The protein resides in the secreted. In Lycosa singoriensis (Wolf spider), this protein is Toxin-like structure LSTX-D9.